We begin with the raw amino-acid sequence, 511 residues long: Glutamyl-tRNA(Gln) amidotransferase subunit B, mitochondrial (511 aa).

Residues 1–6 (MLRRYL) constitute a mitochondrion transit peptide.

The protein belongs to the GatB/GatE family. GatB subfamily. As to quaternary structure, subunit of the heterotrimeric GatFAB amidotransferase (AdT) complex, composed of A, B and F subunits.

The protein localises to the mitochondrion. The enzyme catalyses L-glutamyl-tRNA(Gln) + L-glutamine + ATP + H2O = L-glutaminyl-tRNA(Gln) + L-glutamate + ADP + phosphate + H(+). Functionally, allows the formation of correctly charged Gln-tRNA(Gln) through the transamidation of misacylated Glu-tRNA(Gln) in the mitochondria. The reaction takes place in the presence of glutamine and ATP through an activated gamma-phospho-Glu-tRNA(Gln). The chain is Glutamyl-tRNA(Gln) amidotransferase subunit B, mitochondrial from Lodderomyces elongisporus (strain ATCC 11503 / CBS 2605 / JCM 1781 / NBRC 1676 / NRRL YB-4239) (Yeast).